A 181-amino-acid polypeptide reads, in one-letter code: Large ribosomal subunit protein uL5 (181 aa).

It belongs to the universal ribosomal protein uL5 family. In terms of assembly, part of the 50S ribosomal subunit; part of the 5S rRNA/L5/L18/L25 subcomplex. Contacts the 5S rRNA and the P site tRNA. Forms a bridge to the 30S subunit in the 70S ribosome.

In terms of biological role, this is one of the proteins that bind and probably mediate the attachment of the 5S RNA into the large ribosomal subunit, where it forms part of the central protuberance. In the 70S ribosome it contacts protein S13 of the 30S subunit (bridge B1b), connecting the 2 subunits; this bridge is implicated in subunit movement. Contacts the P site tRNA; the 5S rRNA and some of its associated proteins might help stabilize positioning of ribosome-bound tRNAs. In Mesomycoplasma hyopneumoniae (strain 7448) (Mycoplasma hyopneumoniae), this protein is Large ribosomal subunit protein uL5.